The chain runs to 402 residues: Putative epoxide hydrolase AFT8 (402 aa).

This sequence belongs to the peptidase S33 family.

It participates in mycotoxin biosynthesis. Functionally, putative epoxide hydrolase; part of the gene clusters that mediate the biosynthesis of the host-selective toxins (HSTs) AF-toxins responsible for Alternaria black spot of strawberry disease by the strawberry pathotype. AF-toxin I and III are valine derivatives of 2,3-dyhydroxy-isovaleric acid and 2-hydroxy-isovaleric acid respectively, while AF II is an isoleucine derivative of 2-hydroxy-valeric acid. These derivatives are bound to a 9,10-epoxy-8-hydroxy-9-methyl-decatrienoic acid (EDA) moiety. On cellular level, AF-toxins affect plasma membrane of susceptible cells and cause a sudden increase in loss of K(+) after a few minutes of toxin treatment. The aldo-keto reductase AFTS1 catalyzes the conversion of 2-keto-isovaleric acid (2-KIV) to 2-hydroxy-isovaleric acid (2-HIV) by reduction of its ketone to an alcohol. The acyl-CoA ligase AFT1, the hydrolase AFT2 and the enoyl-CoA hydratases AFT3 and AFT6, but also the polyketide synthase AFT9, the acyl-CoA dehydrogenase AFT10, the cytochrome P450 monooxygenase AFT11 and the oxidoreductase AFT12 are all involved in the biosynthesis of the AK-, AF- and ACT-toxin common EDA structural moiety. The exact function of each enzyme, and of additional enzymes identified within the AF-toxin clusters have still to be determined. In Alternaria alternata (Alternaria rot fungus), this protein is Putative epoxide hydrolase AFT8.